Consider the following 189-residue polypeptide: UPF0398 protein BH1768 (189 aa).

This sequence belongs to the UPF0398 family.

The chain is UPF0398 protein BH1768 from Halalkalibacterium halodurans (strain ATCC BAA-125 / DSM 18197 / FERM 7344 / JCM 9153 / C-125) (Bacillus halodurans).